The sequence spans 357 residues: EGF-like domain-containing protein 2 (357 aa).

A signal peptide spans 1–20; it reads MPPSLSHLFLLSTFASLALC. EGF-like domains follow at residues 21–55 and 61–93; these read SFYC…FNCG and ISAA…PTCQ. Disulfide bonds link C24/C37, C31/C43, C45/C54, C65/C75, C69/C81, and C83/C92.

In terms of tissue distribution, prismatic layer of shell (at protein level). Expressed primarily in the mantle with highest level in the mantle edge and lower level in the mantle pallium.

The protein localises to the secreted. The sequence is that of EGF-like domain-containing protein 2 from Pinctada maxima (Silver-lipped pearl oyster).